The sequence spans 238 residues: 7-cyano-7-deazaguanine synthase (238 aa).

14-24 (FSGGQDSATCL) contributes to the ATP binding site. Residues cysteine 202, cysteine 217, cysteine 220, and cysteine 223 each contribute to the Zn(2+) site.

It belongs to the QueC family. Requires Zn(2+) as cofactor.

It catalyses the reaction 7-carboxy-7-deazaguanine + NH4(+) + ATP = 7-cyano-7-deazaguanine + ADP + phosphate + H2O + H(+). Its pathway is purine metabolism; 7-cyano-7-deazaguanine biosynthesis. Its function is as follows. Catalyzes the ATP-dependent conversion of 7-carboxy-7-deazaguanine (CDG) to 7-cyano-7-deazaguanine (preQ(0)). In Nitrobacter winogradskyi (strain ATCC 25391 / DSM 10237 / CIP 104748 / NCIMB 11846 / Nb-255), this protein is 7-cyano-7-deazaguanine synthase.